A 535-amino-acid chain; its full sequence is MKINKNNYFKIIIFIIYVIINLINASDNVKLSNCGQARAEPTFKQSENGGQCQLPPPSIGTAALSLSAFNGGARCGQCYELTGPLGKTVVMVTDGCNSGEACTQKDLFNFIISNKDFDKIGNSSSYVNIYSLGYQEVSCGFLGNIKIKFGGSLGHNGKVDYSYYFTVSFSNFNIGIKQVQILGTGMVSYMKLKRSLGGFTWNQESGGSKLQFPATLVLTGVDGQIISYKFRQPPANIAIDMKKQFIPQVGLLSSKFNQSEICGMGNVPEYIYEDSLTFGWIVSNSWRFNVFNLSSQDTDDNPTLGESVIKMDLAANGGLAFTREGGFQTKYLESLKVMIKVLPPTNSLQCFFGASGIYVIPGPLGGDWQEISIPISVLKPQKVEYSLSFYNNQGQSITMWIDNIKWIFSPEAPPTPLIITDPTVTPPPLPQSIVTAAAGVVGLNSIGITSNKGGVANLVDGSSNDDDGTGGTGGGASNKVGKRVDGEDGDNFMGGNNAFSYYNDDNSSNILLFSFNITLTFLLLSLIINILLLLF.

An N-terminal signal peptide occupies residues 1–25 (MKINKNNYFKIIIFIIYVIINLINA). Asparagine 24 carries an N-linked (GlcNAc...) asparagine glycan. Residues 26 to 514 (SDNVKLSNCG…DNSSNILLFS (489 aa)) lie on the Extracellular side of the membrane. In terms of domain architecture, Expansin-like EG45 spans 31–144 (LSNCGQARAE…QEVSCGFLGN (114 aa)). 2 disulfide bridges follow: cysteine 34/cysteine 75 and cysteine 78/cysteine 139. N-linked (GlcNAc...) asparagine glycosylation is found at asparagine 122, asparagine 257, and asparagine 292. Residues 459-487 (VDGSSNDDDGTGGTGGGASNKVGKRVDGE) are disordered. An N-linked (GlcNAc...) asparagine glycan is attached at asparagine 506. Residues 515–535 (FNITLTFLLLSLIINILLLLF) traverse the membrane as a helical segment.

It belongs to the expansin family. Expansin A subfamily.

It localises to the membrane. May serve to lubricate the movement of the cellulose microfibrils during cell growth and wall extension and/or may serve to maintain the fluid state of the slug cell wall. This is Expansin-like protein 9 (expl9) from Dictyostelium discoideum (Social amoeba).